Here is a 474-residue protein sequence, read N- to C-terminus: Melanopsin (474 aa).

Over Met-1–Thr-72 the chain is Extracellular. N-linked (GlcNAc...) asparagine glycosylation is found at Asn-31 and Asn-35. A helical membrane pass occupies residues Leu-73–Tyr-93. Residues Thr-94 to Met-107 lie on the Cytoplasmic side of the membrane. Residues Leu-108–Phe-128 form a helical membrane-spanning segment. Topologically, residues Ala-129–Lys-144 are extracellular. An intrachain disulfide couples Cys-143 to Cys-221. Residues Phe-145–Ala-165 form a helical membrane-spanning segment. The Cytoplasmic segment spans residues Met-166–Ala-188. Residues Leu-189–Trp-209 traverse the membrane as a helical segment. Topologically, residues Ser-210–Leu-238 are extracellular. Residues Leu-239–Phe-259 traverse the membrane as a helical segment. The Cytoplasmic segment spans residues Arg-260–Lys-293. A helical transmembrane segment spans residues Val-294 to Leu-314. Residues Val-315 to Arg-355 are Extracellular-facing. Lys-337 is subject to N6-(retinylidene)lysine. Residues Ala-356–Ser-372 form a helical membrane-spanning segment. The Cytoplasmic segment spans residues Gly-373–Met-474. Residues Ala-428–Met-474 are disordered.

Belongs to the G-protein coupled receptor 1 family. Opsin subfamily. Eye; expressed in a photosensitive subset of retinal ganglion cells (at protein level).

It localises to the cell membrane. It is found in the cell projection. The protein resides in the axon. Its subcellular location is the dendrite. The protein localises to the perikaryon. Photoreceptor that binds cis-retinaldehydes. Contributes to pupillar reflex, photoentrainment and other non-image forming responses to light. May be involved in the optokinetic visual tracking response. May be involved in the regulation of retinal hyaloid vessel growth and regression. The polypeptide is Melanopsin (Rattus norvegicus (Rat)).